A 633-amino-acid polypeptide reads, in one-letter code: tRNA uridine 5-carboxymethylaminomethyl modification enzyme MnmG (633 aa).

FAD is bound by residues 15 to 20 (GAGHAG), Ile127, and Ser182. 276 to 290 (GPRYCPSIEDKIVRF) contributes to the NAD(+) binding site. Residue Gln373 participates in FAD binding.

This sequence belongs to the MnmG family. In terms of assembly, homodimer. Heterotetramer of two MnmE and two MnmG subunits. FAD is required as a cofactor.

The protein resides in the cytoplasm. Functionally, NAD-binding protein involved in the addition of a carboxymethylaminomethyl (cmnm) group at the wobble position (U34) of certain tRNAs, forming tRNA-cmnm(5)s(2)U34. The chain is tRNA uridine 5-carboxymethylaminomethyl modification enzyme MnmG from Streptococcus agalactiae serotype Ia (strain ATCC 27591 / A909 / CDC SS700).